We begin with the raw amino-acid sequence, 394 residues long: Immune-associated nucleotide-binding protein 12 (394 aa).

The AIG1-type G domain maps to 45 to 251 (KPARTLLLVG…YMADLSHEIR (207 aa)). Residues 54-61 (GRSGNGKS) form a G1 region. GTP is bound by residues 54-62 (GRSGNGKSA) and Ser75. A G2 region spans residues 81–85 (GVTTA). A G3 region spans residues 103-106 (DTPG). A G4 region spans residues 173-176 (TNED). Positions 210-212 (RNR) are G5. Residue Asn211 coordinates GTP. The stretch at 289–387 (NQQLRQMMER…KQMATDLQKS (99 aa)) forms a coiled coil.

Belongs to the TRAFAC class TrmE-Era-EngA-EngB-Septin-like GTPase superfamily. AIG1/Toc34/Toc159-like paraseptin GTPase family. IAN subfamily.

This Arabidopsis thaliana (Mouse-ear cress) protein is Immune-associated nucleotide-binding protein 12.